The primary structure comprises 184 residues: MIVPISLLFLFLSFVPFSYSATCDFENEVASMSWMVKGDVLQINFEHKNLTENRWASIAFGNGPGMTNLESIIFSRDDNNVITTNTGFTPKKKKVVVDDVSYVTVRNVQLKGDLLRITVTRPLGPAGPRDFSLDQCVNWIVVPGGALSNGKFKKHHGQIYFVKDVCAAKCTAQRMMRVLSNRIH.

Residues 1–20 (MIVPISLLFLFLSFVPFSYS) form the signal peptide. A DOMON domain is found at 28 to 145 (EVASMSWMVK…CVNWIVVPGG (118 aa)). Asn49 carries N-linked (GlcNAc...) asparagine glycosylation.

The protein resides in the secreted. This Caenorhabditis briggsae protein is DOMON domain-containing protein CBG21755.